The primary structure comprises 383 residues: GTP-binding protein 10 homolog (383 aa).

One can recognise an Obg domain in the interval 22-157 (PSFLDTLRLA…RIVNLDLKLI (136 aa)). An OBG-type G domain is found at 158 to 353 (ADVGLVGFPN…VKSQLRRTLV (196 aa)). Residues 164-171 (GFPNAGKS), 211-215 (DLPGL), and 287-290 (NKMD) contribute to the GTP site.

The protein belongs to the TRAFAC class OBG-HflX-like GTPase superfamily. OBG GTPase family.

The protein localises to the nucleus. The protein resides in the nucleolus. Functionally, may be involved in the ribosome maturation process. This is GTP-binding protein 10 homolog from Drosophila pseudoobscura pseudoobscura (Fruit fly).